The primary structure comprises 286 residues: Lipid phosphate phosphatase epsilon 2, chloroplastic (286 aa).

The N-terminal 60 residues, Met1–Met60, are a transit peptide targeting the chloroplast. 5 helical membrane-spanning segments follow: residues Leu133 to Leu149, Ala173 to Thr193, Asn194 to Leu214, Val226 to Ser246, and Ile260 to Asn280.

The protein belongs to the PA-phosphatase related phosphoesterase family. As to expression, expressed in root tips, root branch points, cotyledons and leaves.

It is found in the plastid. Its subcellular location is the chloroplast inner membrane. Its activity is regulated as follows. Inhibited by Mg(2+). Its function is as follows. Exhibits phosphatidate phosphatase (PAP) activity in vitro. May play a secondary role as PAP in plastids. The polypeptide is Lipid phosphate phosphatase epsilon 2, chloroplastic (LPPE2) (Arabidopsis thaliana (Mouse-ear cress)).